We begin with the raw amino-acid sequence, 193 residues long: Probable thymidylate kinase (193 aa).

7 to 14 (GIDGSGKT) serves as a coordination point for ATP.

This sequence belongs to the thymidylate kinase family.

The catalysed reaction is dTMP + ATP = dTDP + ADP. The polypeptide is Probable thymidylate kinase (Pyrobaculum calidifontis (strain DSM 21063 / JCM 11548 / VA1)).